The primary structure comprises 143 residues: Large ribosomal subunit protein uL11 (143 aa).

This sequence belongs to the universal ribosomal protein uL11 family. As to quaternary structure, part of the ribosomal stalk of the 50S ribosomal subunit. Interacts with L10 and the large rRNA to form the base of the stalk. L10 forms an elongated spine to which L12 dimers bind in a sequential fashion forming a multimeric L10(L12)X complex. In terms of processing, one or more lysine residues are methylated.

In terms of biological role, forms part of the ribosomal stalk which helps the ribosome interact with GTP-bound translation factors. This chain is Large ribosomal subunit protein uL11, found in Ralstonia pickettii (strain 12J).